A 264-amino-acid polypeptide reads, in one-letter code: Occludin/ELL domain-containing protein 1 (264 aa).

Positions 1–10 (MHNPDGSASP) are enriched in polar residues. Positions 1–112 (MHNPDGSASP…QPGPHKAKTK (112 aa)) are disordered. Residues 96–105 (PRPPCQPQPG) are compositionally biased toward pro residues. The region spanning 147 to 257 (PDYELKYPPV…QIQKFDDQGD (111 aa)) is the OCEL domain.

The protein belongs to the ELL/occludin family.

This chain is Occludin/ELL domain-containing protein 1 (OCEL1), found in Homo sapiens (Human).